A 230-amino-acid chain; its full sequence is Ribonuclease 3 (230 aa).

Residues 19-134 (ELLTIALTHR…LLGAIYLEHG (116 aa)) enclose the RNase III domain. Position 44 (glutamate 44) interacts with Mg(2+). Aspartate 48 is a catalytic residue. The Mg(2+) site is built by aspartate 120 and glutamate 123. Residues 161 to 229 (DWKSSLQELT…AASAYKTLDE (69 aa)) enclose the DRBM domain.

It belongs to the ribonuclease III family. In terms of assembly, homodimer. Requires Mg(2+) as cofactor.

It localises to the cytoplasm. It catalyses the reaction Endonucleolytic cleavage to 5'-phosphomonoester.. Its function is as follows. Digests double-stranded RNA. Involved in the processing of primary rRNA transcript to yield the immediate precursors to the all rRNAs (23S, 16S and 5S). Processes some mRNAs, and tRNAs when they are encoded in the rRNA operon. Processes pre-crRNA and tracrRNA of type II CRISPR loci if present in the organism. This Mycolicibacterium smegmatis (strain ATCC 700084 / mc(2)155) (Mycobacterium smegmatis) protein is Ribonuclease 3 (rnc).